Reading from the N-terminus, the 150-residue chain is Large ribosomal subunit protein bL9 (150 aa).

This sequence belongs to the bacterial ribosomal protein bL9 family.

In terms of biological role, binds to the 23S rRNA. In Wigglesworthia glossinidia brevipalpis, this protein is Large ribosomal subunit protein bL9.